The chain runs to 962 residues: AP2-associated protein kinase 1 (962 aa).

Met1 carries the N-acetylmethionine modification. Residues 1-11 (MKKFFDSRREQ) are compositionally biased toward basic and acidic residues. Residues 1 to 27 (MKKFFDSRREQGSSGLGSGSSGGGGSS) form a disordered region. Phosphoserine is present on Ser14. The segment covering 14–27 (SGLGSGSSGGGGSS) has biased composition (gly residues). The 269-residue stretch at 46–314 (VTVDEVLAEG…QVSYFSFKLL (269 aa)) folds into the Protein kinase domain. ATP is bound by residues 52 to 60 (LAEGGFALV) and Lys74. The Proton acceptor role is filled by Asp176. Phosphotyrosine is present on Tyr234. Position 235 is a phosphoserine (Ser235). Disordered regions lie at residues 325–515 (NSPI…QFQA) and 576–633 (PQAQ…RAGH). A phosphothreonine mark is found at Thr353 and Thr388. At Arg390 the chain carries Omega-N-methylarginine. The span at 397-418 (PLPQATGPSNQPSLLASVSQPK) shows a compositional bias: polar residues. Positions 419–434 (AQATPSQPLQSSQPKQ) are enriched in low complexity. The segment covering 435–444 (PQAPPTPQQT) has biased composition (pro residues). Thr440 bears the Phosphothreonine mark. 3 stretches are compositionally biased toward low complexity: residues 445 to 485 (PAPQ…QPQQ), 498 to 514 (QQQQ…QQFQ), and 576 to 606 (PQAQ…KVQT). Thr607 bears the Phosphothreonine mark. A compositionally biased stretch (polar residues) spans 614-628 (GQKVGSLTPPSSPKT). Residue Ser619 is modified to Phosphoserine. Thr621 carries the post-translational modification Phosphothreonine. A phosphoserine mark is found at Ser624, Ser625, Ser638, and Ser651. Phosphothreonine is present on Thr654. Low complexity predominate over residues 664–677 (ASLSKSKSATTTPS). The disordered stretch occupies residues 664 to 702 (ASLSKSKSATTTPSGSPRTSQQNVSNASEGSTWNPFDDD). Positions 678–697 (GSPRTSQQNVSNASEGSTWN) are enriched in polar residues. Phosphoserine is present on residues Ser732, Ser847, Ser938, and Ser939. A clathrin-binding domain (CBD) region spans residues 824–961 (EKADAAVESL…SLLLVDQLID (138 aa)). Disordered stretches follow at residues 839 to 860 (PPVA…TDSL) and 925 to 946 (LITK…ESSL). The span at 846 to 860 (PSHTESVTSNRTDSL) shows a compositional bias: polar residues. The segment covering 932–945 (GGHSRNSSGSSESS) has biased composition (low complexity).

It belongs to the protein kinase superfamily. Ser/Thr protein kinase family. Interacts (via CBD domain) with clathrin. Interacts with AP-2 complex. Interacts with NUMB. Interacts with alpha-adaptin. Interacts with EPS15. Interacts with membrane-bound activated NOTCH1 but not with the inactive full-length form of NOTCH1. Preferentially interacts with monoubiquitinated activated NOTCH1 compared to the non-ubiquitinated form. In terms of processing, autophosphorylated.

Its subcellular location is the cell membrane. The protein resides in the membrane. The protein localises to the clathrin-coated pit. It is found in the presynapse. It catalyses the reaction L-seryl-[protein] + ATP = O-phospho-L-seryl-[protein] + ADP + H(+). The catalysed reaction is L-threonyl-[protein] + ATP = O-phospho-L-threonyl-[protein] + ADP + H(+). Stimulated by clathrin. In terms of biological role, regulates clathrin-mediated endocytosis by phosphorylating the AP2M1/mu2 subunit of the adaptor protein complex 2 (AP-2) which ensures high affinity binding of AP-2 to cargo membrane proteins during the initial stages of endocytosis. Preferentially, may phosphorylate substrates on threonine residues. Regulates phosphorylation of other AP-2 subunits as well as AP-2 localization and AP-2-mediated internalization of ligand complexes. Phosphorylates NUMB and regulates its cellular localization, promoting NUMB localization to endosomes. Binds to and stabilizes the activated form of NOTCH1, increases its localization in endosomes and regulates its transcriptional activity. The sequence is that of AP2-associated protein kinase 1 (Aak1) from Rattus norvegicus (Rat).